The sequence spans 471 residues: Ribulose bisphosphate carboxylase large chain (471 aa).

Residues asparagine 115 and threonine 165 each coordinate substrate. Lysine 167 functions as the Proton acceptor in the catalytic mechanism. Substrate is bound at residue lysine 169. Mg(2+)-binding residues include lysine 193, aspartate 195, and glutamate 196. The residue at position 193 (lysine 193) is an N6-carboxylysine. Histidine 286 acts as the Proton acceptor in catalysis. Residues arginine 287, histidine 319, and serine 371 each coordinate substrate.

It belongs to the RuBisCO large chain family. Type I subfamily. In terms of assembly, heterohexadecamer of 8 large chains and 8 small chains. Requires Mg(2+) as cofactor.

The catalysed reaction is 2 (2R)-3-phosphoglycerate + 2 H(+) = D-ribulose 1,5-bisphosphate + CO2 + H2O. It carries out the reaction D-ribulose 1,5-bisphosphate + O2 = 2-phosphoglycolate + (2R)-3-phosphoglycerate + 2 H(+). Functionally, ruBisCO catalyzes two reactions: the carboxylation of D-ribulose 1,5-bisphosphate, the primary event in carbon dioxide fixation, as well as the oxidative fragmentation of the pentose substrate. Both reactions occur simultaneously and in competition at the same active site. The polypeptide is Ribulose bisphosphate carboxylase large chain (Alvinoconcha hessleri symbiotic bacterium).